The following is an 88-amino-acid chain: Apolipoprotein C-I (88 aa).

A signal peptide spans 1 to 26 (MRLFLSLPVLVVVLAMVWEGPAPTQA).

Belongs to the apolipoprotein C1 family.

The protein resides in the secreted. Its function is as follows. Inhibitor of lipoprotein binding to the low density lipoprotein (LDL) receptor, LDL receptor-related protein, and very low density lipoprotein (VLDL) receptor. Associates with high density lipoproteins (HDL) and the triacylglycerol-rich lipoproteins in the plasma and makes up about 10% of the protein of the VLDL and 2% of that of HDL. Appears to interfere directly with fatty acid uptake and is also the major plasma inhibitor of cholesteryl ester transfer protein (CETP). Binds free fatty acids and reduces their intracellular esterification. Modulates the interaction of APOE with beta-migrating VLDL and inhibits binding of beta-VLDL to the LDL receptor-related protein. This Neomonachus schauinslandi (Hawaiian monk seal) protein is Apolipoprotein C-I (APOC1).